Reading from the N-terminus, the 197-residue chain is Phospholipid hydroperoxide glutathione peroxidase (197 aa).

Ser-40 bears the Phosphoserine mark. Sec-73 is an active-site residue. A non-standard amino acid (selenocysteine) is located at residue Sec-73.

This sequence belongs to the glutathione peroxidase family. In terms of assembly, monomer. Has a tendency to form higher mass oligomers. Interacts with FUNDC1; this interaction promotes GPX4 recruitment into mitochondria through TOM/TIM complex where it is degraded by mitophagy. In terms of tissue distribution, expressed in testis. Also expressed in liver, lung, kidney and spinal cord.

Its subcellular location is the mitochondrion. The protein resides in the cytoplasm. The enzyme catalyses a hydroperoxy polyunsaturated fatty acid + 2 glutathione = a hydroxy polyunsaturated fatty acid + glutathione disulfide + H2O. It catalyses the reaction 2 glutathione + H2O2 = glutathione disulfide + 2 H2O. The catalysed reaction is tert-butyl hydroperoxide + 2 glutathione = tert-butanol + glutathione disulfide + H2O. It carries out the reaction cumene hydroperoxide + 2 glutathione = 2-phenylpropan-2-ol + glutathione disulfide + H2O. The enzyme catalyses (9S)-hydroperoxy-(10E,12Z)-octadecadienoate + 2 glutathione = (9S)-hydroxy-(10E,12Z)-octadecadienoate + glutathione disulfide + H2O. It catalyses the reaction (13S)-hydroperoxy-(9Z,11E)-octadecadienoate + 2 glutathione = (13S)-hydroxy-(9Z,11E)-octadecadienoate + glutathione disulfide + H2O. The catalysed reaction is (5S)-hydroperoxy-(6E,8Z,11Z,14Z)-eicosatetraenoate + 2 glutathione = (5S)-hydroxy-(6E,8Z,11Z,14Z)-eicosatetraenoate + glutathione disulfide + H2O. It carries out the reaction (12R)-hydroperoxy-(5Z,8Z,10E,14Z)-eicosatetraenoate + 2 glutathione = (12R)-hydroxy-(5Z,8Z,10E,14Z)-eicosatetraenoate + glutathione disulfide + H2O. The enzyme catalyses (12S)-hydroperoxy-(5Z,8Z,10E,14Z)-eicosatetraenoate + 2 glutathione = (12S)-hydroxy-(5Z,8Z,10E,14Z)-eicosatetraenoate + glutathione disulfide + H2O. It catalyses the reaction (15S)-hydroperoxy-(5Z,8Z,11Z,13E)-eicosatetraenoate + 2 glutathione = (15S)-hydroxy-(5Z,8Z,11Z,13E)-eicosatetraenoate + glutathione disulfide + H2O. The catalysed reaction is (5S)-hydroperoxy-(6E,8Z,11Z,14Z,17Z)-eicosapentaenoate + 2 glutathione = (5S)-hydroxy-(6E,8Z,11Z,14Z,17Z)-eicosapentaenoate + glutathione disulfide + H2O. It carries out the reaction (12S)-hydroperoxy-(5Z,8Z,10E,14Z,17Z)-eicosapentaenoate + 2 glutathione = (12S)-hydroxy-(5Z,8Z,10E,14Z,17Z)-eicosapentaenoate + glutathione disulfide + H2O. The enzyme catalyses (15S)-hydroperoxy-(5Z,8Z,11Z,13E,17Z)-eicosapentaenoate + 2 glutathione = (15S)-hydroxy-(5Z,8Z,11Z,13E,17Z)-eicosapentaenoate + glutathione disulfide + H2O. It catalyses the reaction (15S)-hydroperoxy-(11Z,13E)-eicosadienoate + 2 glutathione = (15S)-hydroxy-(11Z,13E)-eicosadienoate + glutathione disulfide + H2O. The catalysed reaction is (17S)-hydroperoxy-(4Z,7Z,10Z,13Z,15E,19Z)-docosahexaenoate + 2 glutathione = (17S)-hydroxy-(4Z,7Z,10Z,13Z,15E,19Z)-docosahexaenoate + glutathione disulfide + H2O. It carries out the reaction a hydroperoxy-1,2-diacyl-glycero-3-phosphocholine + 2 glutathione = a hydroxy-1,2-diacyl-glycero-3-phosphocholine + glutathione disulfide + H2O. Its function is as follows. Essential antioxidant peroxidase that directly reduces phospholipid hydroperoxide even if they are incorporated in membranes and lipoproteins. Can also reduce fatty acid hydroperoxide, cholesterol hydroperoxide and thymine hydroperoxide. Plays a key role in protecting cells from oxidative damage by preventing membrane lipid peroxidation. Required to prevent cells from ferroptosis, a non-apoptotic cell death resulting from an iron-dependent accumulation of lipid reactive oxygen species. The presence of selenocysteine (Sec) versus Cys at the active site is essential for life: it provides resistance to overoxidation and prevents cells against ferroptosis. The presence of Sec at the active site is also essential for the survival of a specific type of parvalbumin-positive interneurons, thereby preventing against fatal epileptic seizures. May be required to protect cells from the toxicity of ingested lipid hydroperoxides. Required for normal sperm development and male fertility. Essential for maturation and survival of photoreceptor cells. Plays a role in a primary T-cell response to viral and parasitic infection by protecting T-cells from ferroptosis and by supporting T-cell expansion. Plays a role of glutathione peroxidase in platelets in the arachidonic acid metabolism. Reduces hydroperoxy ester lipids formed by a 15-lipoxygenase that may play a role as down-regulator of the cellular 15-lipoxygenase pathway. Can also reduce small soluble hydroperoxides such as H2O2, cumene hydroperoxide and tert-butyl hydroperoxide. In Callithrix jacchus (White-tufted-ear marmoset), this protein is Phospholipid hydroperoxide glutathione peroxidase.